Consider the following 101-residue polypeptide: Small ribosomal subunit protein uS14 (101 aa).

It belongs to the universal ribosomal protein uS14 family. As to quaternary structure, part of the 30S ribosomal subunit. Contacts proteins S3 and S10.

In terms of biological role, binds 16S rRNA, required for the assembly of 30S particles and may also be responsible for determining the conformation of the 16S rRNA at the A site. The polypeptide is Small ribosomal subunit protein uS14 (Phenylobacterium zucineum (strain HLK1)).